The primary structure comprises 468 residues: Putative magnesium transporter MRS2-G (468 aa).

Disordered regions lie at residues 1 to 76 and 182 to 205; these read MGRR…AGKV and NGQP…VPRL. Composition is skewed to low complexity over residues 14–23 and 31–45; these read ASNASTSSST and RLPS…SSPS. The segment covering 46–67 has biased composition (pro residues); that stretch reads PASPSPPPPSASHPAPPSPPLA. The segment covering 187–197 has biased composition (basic and acidic residues); that stretch reads GDDHGEKHDDS. The next 2 helical transmembrane spans lie at 402–422 and 437–457; these read LTLT…GAFA and FFWP…IVLL.

The protein belongs to the CorA metal ion transporter (MIT) (TC 1.A.35.5) family.

It is found in the membrane. Functionally, putative magnesium transporter. This chain is Putative magnesium transporter MRS2-G (MRS2-G), found in Oryza sativa subsp. indica (Rice).